The chain runs to 560 residues: Membrane protein insertase YidC (560 aa).

A helical membrane pass occupies residues 7–27 (ILIVALAIVSYVMVLKWNQDY). Residues 38 to 56 (ASSTTTSGLPDTATGNNAA) show a composition bias toward polar residues. The tract at residues 38–76 (ASSTTTSGLPDTATGNNAAASDDIPRAASDTSAPAETPV) is disordered. Transmembrane regions (helical) follow at residues 367–387 (IVGN…GIFF), 437–457 (LGGC…YWVL), 468–488 (FMLW…PIIM), and 515–535 (PIIF…YWVV).

It belongs to the OXA1/ALB3/YidC family. Type 1 subfamily. In terms of assembly, interacts with the Sec translocase complex via SecD. Specifically interacts with transmembrane segments of nascent integral membrane proteins during membrane integration.

The protein resides in the cell inner membrane. Its function is as follows. Required for the insertion and/or proper folding and/or complex formation of integral membrane proteins into the membrane. Involved in integration of membrane proteins that insert both dependently and independently of the Sec translocase complex, as well as at least some lipoproteins. Aids folding of multispanning membrane proteins. In Pseudomonas fluorescens (strain Pf0-1), this protein is Membrane protein insertase YidC.